The chain runs to 890 residues: Leucine--tRNA ligase (890 aa).

A 'HIGH' region motif is present at residues 48–58 (PYPSGKLHMGH). Positions 645–649 (KMSKS) match the 'KMSKS' region motif. Residue Lys648 participates in ATP binding.

This sequence belongs to the class-I aminoacyl-tRNA synthetase family.

The protein localises to the cytoplasm. The catalysed reaction is tRNA(Leu) + L-leucine + ATP = L-leucyl-tRNA(Leu) + AMP + diphosphate. The chain is Leucine--tRNA ligase from Polynucleobacter asymbioticus (strain DSM 18221 / CIP 109841 / QLW-P1DMWA-1) (Polynucleobacter necessarius subsp. asymbioticus).